The following is a 246-amino-acid chain: Acetoacetyl-CoA reductase (246 aa).

NADP(+) is bound by residues G12–I14 and C88–T92. Substrate-binding positions include D94 and Q147–Q150. The Proton acceptor role is filled by Y153. Residue P183–V186 participates in NADP(+) binding. Residue G184–Y185 coordinates substrate.

It belongs to the short-chain dehydrogenases/reductases (SDR) family.

Its subcellular location is the cytoplasm. It catalyses the reaction a (3R)-3-hydroxyacyl-CoA + NADP(+) = a 3-oxoacyl-CoA + NADPH + H(+). The protein operates within biopolymer metabolism; poly-(R)-3-hydroxybutanoate biosynthesis. This chain is Acetoacetyl-CoA reductase, found in Allochromatium vinosum (strain ATCC 17899 / DSM 180 / NBRC 103801 / NCIMB 10441 / D) (Chromatium vinosum).